Reading from the N-terminus, the 335-residue chain is MGYISMNSTNLIRPYEGTELNDAGRKYKKIGERLLREKKLGVVILSGGQGTRLGSDEPKGLFKIKGKTLFEWHMETIKELISKYNADIAVFIMTSSFTDEAVRKYFQSTDFGLKIQFFKQRNSLCVGTDGKPLEWYDGHAESPYGNGDIFNAIQQVNLEGIEALNVICIDNVLAKILDPVFVGAFYSDDYDILSKSVTKEEKESVGAFLMDERLKIKEYSENDAKGEGIQGNICNHIFKTSFIKKMKNINLPEHKAFKKIPYTISGKLIKPVKPNGFKKETFIFDSFEYTQKNGVMNVPREKEFSPLKNGMDSSVDNPVTCTIAVERHRIKTTIQ.

The Substrate binding motif lies at 45-48 (LSGG). UTP is bound by residues 45-48 (LSGG), Lys59, Gln120, and Gly145. Asn146 serves as a coordination point for substrate. Asp170 provides a ligand contact to UTP. A Substrate binding motif is present at residues 218–219 (EY). UTP is bound at residue Lys278. Residue Lys308 participates in substrate binding.

The protein belongs to the UDPGP type 1 family.

Its subcellular location is the cytoplasm. The catalysed reaction is N-acetyl-alpha-D-glucosamine 1-phosphate + UTP + H(+) = UDP-N-acetyl-alpha-D-glucosamine + diphosphate. Its pathway is nucleotide-sugar biosynthesis; UDP-N-acetyl-alpha-D-glucosamine biosynthesis; UDP-N-acetyl-alpha-D-glucosamine from N-acetyl-alpha-D-glucosamine 1-phosphate: step 1/1. The protein is Probable UDP-N-acetylglucosamine pyrophosphorylase (UAP1) of Encephalitozoon cuniculi (strain GB-M1) (Microsporidian parasite).